A 185-amino-acid polypeptide reads, in one-letter code: Large ribosomal subunit protein uL5 (185 aa).

This sequence belongs to the universal ribosomal protein uL5 family. In terms of assembly, part of the 50S ribosomal subunit; part of the 5S rRNA subcomplex. Contacts the 5S rRNA and the P site tRNA. Forms a bridge to the 30S subunit in the 70S ribosome. In terms of processing, both N-terminus methionine truncation and retention have been observed for this protein. Post-translationally, may be methylated twice, on undetermined residues.

Functionally, this is one of the proteins that bind and probably mediate the attachment of the 5S RNA into the large ribosomal subunit, where it forms part of the central protuberance. In the 70S ribosome it contacts protein S13 of the 30S subunit (bridge B1b), connecting the 2 subunits; this bridge is implicated in subunit movement. Contacts the P site tRNA; the 5S rRNA and some of its associated proteins might help stabilize positioning of ribosome-bound tRNAs. The chain is Large ribosomal subunit protein uL5 from Rhodopseudomonas palustris (strain ATCC BAA-98 / CGA009).